Here is a 60-residue protein sequence, read N- to C-terminus: Protein MGF 360-5L (60 aa).

Belongs to the asfivirus MGF 360 family.

Its function is as follows. Plays a role in virus cell tropism, and may be required for efficient virus replication in macrophages. The protein is Protein MGF 360-5L of Ornithodoros (relapsing fever ticks).